Consider the following 302-residue polypeptide: MRLIFMGSPDFSVPVLEALHAHHEVVCVYCQPPRPAGRGKKDRPTPVQTRAEELGLPVRYPTSLRTPEAQAEFAALGAEAAVVVAYGLILPQPILDAPERGCLNIHASLLPRWRGAAPIHRAILAGDEETGICIMQMEAGLDTGPVLMCEKTHIGPEETVQDLHDRLSDMGARLILGALGALDDLVPRPQPDAGVTYAEKIAKAEAGIDWTRPAAEIDRQIRGLSPFPGAWTLLNGERVKLLRCRLAEGQGAPGAVLPGLTIACGTGAVEITLAQREGKRPMEPEEFLRGFPLPEGSRAHTA.

108–111 contacts (6S)-5,6,7,8-tetrahydrofolate; the sequence is SLLP. The segment covering 276 to 288 has biased composition (basic and acidic residues); it reads REGKRPMEPEEFL. The interval 276–302 is disordered; the sequence is REGKRPMEPEEFLRGFPLPEGSRAHTA.

The protein belongs to the Fmt family.

The enzyme catalyses L-methionyl-tRNA(fMet) + (6R)-10-formyltetrahydrofolate = N-formyl-L-methionyl-tRNA(fMet) + (6S)-5,6,7,8-tetrahydrofolate + H(+). In terms of biological role, attaches a formyl group to the free amino group of methionyl-tRNA(fMet). The formyl group appears to play a dual role in the initiator identity of N-formylmethionyl-tRNA by promoting its recognition by IF2 and preventing the misappropriation of this tRNA by the elongation apparatus. In Cereibacter sphaeroides (strain ATCC 17029 / ATH 2.4.9) (Rhodobacter sphaeroides), this protein is Methionyl-tRNA formyltransferase.